We begin with the raw amino-acid sequence, 347 residues long: NADH-ubiquinone oxidoreductase chain 2 (347 aa).

Helical transmembrane passes span 3–23, 25–45, 59–79, 96–116, 122–142, 149–169, 178–198, 201–221, 237–257, 274–294, and 323–343; these read PPIF…VMTS, HWML…PILM, YFLT…INLL, ILMT…FWVP, ISLS…LSIL, INPH…GWGG, IMAY…LYNP, MFLN…LFML, APLI…LPPL, EMII…YFYM, and TIFL…TPMI.

Belongs to the complex I subunit 2 family. In terms of assembly, core subunit of respiratory chain NADH dehydrogenase (Complex I) which is composed of 45 different subunits. Interacts with TMEM242.

The protein localises to the mitochondrion inner membrane. The catalysed reaction is a ubiquinone + NADH + 5 H(+)(in) = a ubiquinol + NAD(+) + 4 H(+)(out). In terms of biological role, core subunit of the mitochondrial membrane respiratory chain NADH dehydrogenase (Complex I) which catalyzes electron transfer from NADH through the respiratory chain, using ubiquinone as an electron acceptor. Essential for the catalytic activity and assembly of complex I. This chain is NADH-ubiquinone oxidoreductase chain 2, found in Viverra tangalunga (Malayan civet).